The chain runs to 333 residues: Ornithine carbamoyltransferase (333 aa).

Carbamoyl phosphate contacts are provided by residues 56-59 (STRT), R107, and 134-137 (HPTQ). L-ornithine contacts are provided by residues N167, D231, and 235-236 (SM). Residues 273 to 274 (CL) and R318 contribute to the carbamoyl phosphate site.

Belongs to the aspartate/ornithine carbamoyltransferase superfamily. OTCase family.

It localises to the cytoplasm. The catalysed reaction is carbamoyl phosphate + L-ornithine = L-citrulline + phosphate + H(+). Its pathway is amino-acid degradation; L-arginine degradation via ADI pathway; carbamoyl phosphate from L-arginine: step 2/2. Its function is as follows. Reversibly catalyzes the transfer of the carbamoyl group from carbamoyl phosphate (CP) to the N(epsilon) atom of ornithine (ORN) to produce L-citrulline. In Clostridium botulinum (strain Langeland / NCTC 10281 / Type F), this protein is Ornithine carbamoyltransferase.